The primary structure comprises 397 residues: Beta sliding clamp (397 aa).

This sequence belongs to the beta sliding clamp family. Forms a ring-shaped head-to-tail homodimer around DNA which binds and tethers DNA polymerases and other proteins to the DNA. The DNA replisome complex has a single clamp-loading complex (3 tau and 1 each of delta, delta', psi and chi subunits) which binds 3 Pol III cores (1 core on the leading strand and 2 on the lagging strand) each with a beta sliding clamp dimer. Additional proteins in the replisome are other copies of gamma, psi and chi, Ssb, DNA helicase and RNA primase.

Its subcellular location is the cytoplasm. Its function is as follows. Confers DNA tethering and processivity to DNA polymerases and other proteins. Acts as a clamp, forming a ring around DNA (a reaction catalyzed by the clamp-loading complex) which diffuses in an ATP-independent manner freely and bidirectionally along dsDNA. Initially characterized for its ability to contact the catalytic subunit of DNA polymerase III (Pol III), a complex, multichain enzyme responsible for most of the replicative synthesis in bacteria; Pol III exhibits 3'-5' exonuclease proofreading activity. The beta chain is required for initiation of replication as well as for processivity of DNA replication. The sequence is that of Beta sliding clamp (dnaN) from Mycolicibacterium smegmatis (strain ATCC 700084 / mc(2)155) (Mycobacterium smegmatis).